A 488-amino-acid chain; its full sequence is 2,3-bisphosphoglycerate-independent phosphoglycerate mutase (488 aa).

Ser10 acts as the Phosphoserine intermediate in catalysis. A Mn(2+)-binding site is contributed by Ser10. Residues His69, 99–100 (RD), Arg135, Arg142, 215–218 (RADR), and Lys290 each bind substrate. Mn(2+)-binding residues include Asp359, His363, Asp400, His401, and His430.

This sequence belongs to the BPG-independent phosphoglycerate mutase family. Monomer. Requires Mn(2+) as cofactor.

Its subcellular location is the cytoplasm. The catalysed reaction is (2R)-2-phosphoglycerate = (2R)-3-phosphoglycerate. It functions in the pathway carbohydrate degradation; glycolysis; pyruvate from D-glyceraldehyde 3-phosphate: step 3/5. Its function is as follows. Catalyzes the interconversion of 2-phosphoglycerate and 3-phosphoglycerate. This Prunus dulcis (Almond) protein is 2,3-bisphosphoglycerate-independent phosphoglycerate mutase.